The sequence spans 516 residues: UvrABC system protein C (516 aa).

In terms of domain architecture, GIY-YIG spans 9–87 (HLPGCYLFKD…IKKHWPRYNI (79 aa)). Positions 191–226 (GELIESMEKEMKKMAAKQMFEQAMALRDEISALEYL) constitute a UVR domain.

The protein belongs to the UvrC family. In terms of assembly, interacts with UvrB in an incision complex.

It localises to the cytoplasm. The UvrABC repair system catalyzes the recognition and processing of DNA lesions. UvrC both incises the 5' and 3' sides of the lesion. The N-terminal half is responsible for the 3' incision and the C-terminal half is responsible for the 5' incision. This chain is UvrABC system protein C, found in Methanosarcina acetivorans (strain ATCC 35395 / DSM 2834 / JCM 12185 / C2A).